The chain runs to 208 residues: N-(5'-phosphoribosyl)anthranilate isomerase (208 aa).

This sequence belongs to the TrpF family.

It carries out the reaction N-(5-phospho-beta-D-ribosyl)anthranilate = 1-(2-carboxyphenylamino)-1-deoxy-D-ribulose 5-phosphate. It functions in the pathway amino-acid biosynthesis; L-tryptophan biosynthesis; L-tryptophan from chorismate: step 3/5. The protein is N-(5'-phosphoribosyl)anthranilate isomerase of Chlamydia trachomatis serovar L2 (strain ATCC VR-902B / DSM 19102 / 434/Bu).